The following is a 172-amino-acid chain: Translationally-controlled tumor protein homolog (172 aa).

The region spanning M1 to C172 is the TCTP domain.

Belongs to the TCTP family.

It is found in the cytoplasm. Its function is as follows. Involved in calcium binding and microtubule stabilization. The protein is Translationally-controlled tumor protein homolog of Drosophila yakuba (Fruit fly).